The chain runs to 526 residues: Peptide chain release factor 3 (526 aa).

One can recognise a tr-type G domain in the interval 8–277 (GKRRTFAIIS…GLTDWAPAPQ (270 aa)). Residues 17 to 24 (SHPDAGKT), 85 to 89 (DTPGH), and 139 to 142 (NKLD) contribute to the GTP site.

The protein belongs to the TRAFAC class translation factor GTPase superfamily. Classic translation factor GTPase family. PrfC subfamily.

Its subcellular location is the cytoplasm. Increases the formation of ribosomal termination complexes and stimulates activities of RF-1 and RF-2. It binds guanine nucleotides and has strong preference for UGA stop codons. It may interact directly with the ribosome. The stimulation of RF-1 and RF-2 is significantly reduced by GTP and GDP, but not by GMP. The polypeptide is Peptide chain release factor 3 (Aliivibrio fischeri (strain ATCC 700601 / ES114) (Vibrio fischeri)).